The sequence spans 637 residues: Early transcription factor 70 kDa subunit (637 aa).

The 154-residue stretch at 32–185 (RTIIDENRSV…GHIIDLMSEE (154 aa)) folds into the Helicase ATP-binding domain. ATP is bound at residue 45–52 (HIMGSGKT). The short motif at 135–138 (DEAH) is the DEXH box element. The 181-residue stretch at 327–507 (KFKYFINRIQ…VLPFDIKKLL (181 aa)) folds into the Helicase C-terminal domain.

The protein belongs to the helicase family. VETF subfamily. Heterodimer of a 70 kDa and a 82 kDa subunit. Part of the early transcription complex composed of ETF, RAP94/OPG109, and the DNA-directed RNA polymerase.

It is found in the virion. In terms of biological role, acts with RNA polymerase to initiate transcription from early gene promoters. Is recruited by the RPO-associated protein of 94 kDa RAP94/OPG109 to form the early transcription complex, which also contains the core RNA polymerase. ETF heterodimer binds to early gene promoters. The chain is Early transcription factor 70 kDa subunit (OPG118) from Homo sapiens (Human).